A 198-amino-acid chain; its full sequence is Recombination protein RecR (198 aa).

Residues 57-72 (CSVCGHITENDPCYIC) form a C4-type zinc finger. In terms of domain architecture, Toprim spans 80-175 (SVICVVEDDK…KVTRLAQGLS (96 aa)).

Belongs to the RecR family.

In terms of biological role, may play a role in DNA repair. It seems to be involved in an RecBC-independent recombinational process of DNA repair. It may act with RecF and RecO. The polypeptide is Recombination protein RecR (Staphylococcus aureus (strain JH1)).